The following is a 200-amino-acid chain: Pyridoxal phosphate homeostasis protein (200 aa).

Lys11 is modified (N6-(pyridoxal phosphate)lysine).

Belongs to the pyridoxal phosphate-binding protein YggS/PROSC family. In terms of assembly, monomer.

Its function is as follows. Pyridoxal 5'-phosphate (PLP)-binding protein, which is involved in PLP homeostasis. This chain is Pyridoxal phosphate homeostasis protein, found in Buchnera aphidicola subsp. Acyrthosiphon pisum (strain APS) (Acyrthosiphon pisum symbiotic bacterium).